A 204-amino-acid chain; its full sequence is FMN-dependent NADH:quinone oxidoreductase (204 aa).

FMN-binding positions include serine 10, 15–17 (SLS), and 139–142 (TSGG).

Belongs to the azoreductase type 1 family. As to quaternary structure, homodimer. It depends on FMN as a cofactor.

The catalysed reaction is 2 a quinone + NADH + H(+) = 2 a 1,4-benzosemiquinone + NAD(+). It carries out the reaction N,N-dimethyl-1,4-phenylenediamine + anthranilate + 2 NAD(+) = 2-(4-dimethylaminophenyl)diazenylbenzoate + 2 NADH + 2 H(+). In terms of biological role, quinone reductase that provides resistance to thiol-specific stress caused by electrophilic quinones. Its function is as follows. Also exhibits azoreductase activity. Catalyzes the reductive cleavage of the azo bond in aromatic azo compounds to the corresponding amines. The sequence is that of FMN-dependent NADH:quinone oxidoreductase from Rhizobium leguminosarum bv. trifolii (strain WSM2304).